Here is a 488-residue protein sequence, read N- to C-terminus: Adenylosuccinate synthetase 1, chloroplastic (488 aa).

The N-terminal 47 residues, 1–47 (MSLSTVNHAAAAAAAAAGPGKSFSAAAPAAPSVRLPRTRAPAAAAVS), are a transit peptide targeting the chloroplast. Residues 75–81 (GDEGKGK) and 103–105 (GHT) each bind GTP. D76 serves as the catalytic Proton acceptor. 2 residues coordinate Mg(2+): D76 and G103. Residues 76–79 (DEGK), 101–104 (NAGH), T193, R207, Q287, T302, and R366 each bind IMP. H104 (proton donor) is an active-site residue. 362–368 (TTTGRPR) is a substrate binding site. Residues R368, 394 to 396 (KLD), and 477 to 479 (GVG) each bind GTP.

The protein belongs to the adenylosuccinate synthetase family. Homodimer. Requires Mg(2+) as cofactor.

It is found in the plastid. The protein localises to the chloroplast. It catalyses the reaction IMP + L-aspartate + GTP = N(6)-(1,2-dicarboxyethyl)-AMP + GDP + phosphate + 2 H(+). It functions in the pathway purine metabolism; AMP biosynthesis via de novo pathway; AMP from IMP: step 1/2. In terms of biological role, plays an important role in the de novo pathway and in the salvage pathway of purine nucleotide biosynthesis. Catalyzes the first committed step in the biosynthesis of AMP from IMP. The protein is Adenylosuccinate synthetase 1, chloroplastic of Oryza sativa subsp. japonica (Rice).